A 212-amino-acid polypeptide reads, in one-letter code: uncharacterized protein (212 aa).

4 consecutive transmembrane segments (helical) span residues 20-40 (FLIG…LIIC), 70-90 (LMLL…YWLG), 155-175 (FVLI…YLGE), and 192-212 (QIVI…MEKI).

The protein belongs to the DedA family.

Its subcellular location is the cell membrane. This is an uncharacterized protein from Haemophilus influenzae (strain ATCC 51907 / DSM 11121 / KW20 / Rd).